The following is a 132-amino-acid chain: Translation initiation factor 5A (132 aa).

At Lys-36 the chain carries Hypusine.

Belongs to the eIF-5A family.

It localises to the cytoplasm. Functions by promoting the formation of the first peptide bond. The polypeptide is Translation initiation factor 5A (eIF5A) (Pyrobaculum arsenaticum (strain DSM 13514 / JCM 11321 / PZ6)).